Consider the following 966-residue polypeptide: Dynamin-like GTPase OPA1, mitochondrial (966 aa).

The N-terminal 86 residues, 1-86 (MLRAGSVVTC…GGHGYQQHRT (86 aa)), are a transit peptide targeting the mitochondrion. Topologically, residues 87–95 (FWVARLAAR) are mitochondrial matrix. The helical transmembrane segment at 96 to 112 (LLKLRYILLGSAVGGGY) threads the bilayer. The Mitochondrial intermembrane segment spans residues 113 to 776 (TAKKTYDEWK…SVIADMVGPD (664 aa)). The segment at 189-217 (ESALRAPDVPPASAAMADSGDKQFKKSSD) is disordered. Residues 207–217 (SGDKQFKKSSD) are compositionally biased toward basic and acidic residues. Positions 213 to 259 (KKSSDKEKVDQLQEELLRTQLKYQRMLERLEKENKELRKVVLQKDDK) form a coiled coil. The Dynamin-type G domain maps to 291 to 567 (QDHLPRVVVV…FWKMVRESVE (277 aa)). Positions 301-308 (GDQSAGKT) are G1 motif. The GTP site is built by Ser304, Gly306, Lys307, Thr308, Ser309, and Gly323. Thr308 is a binding site for Mg(2+). A G2 motif region spans residues 327–330 (MMTR). Mg(2+)-binding residues include Thr329 and Asp404. The tract at residues 404–407 (DLPG) is G3 motif. A G4 motif region spans residues 473 to 476 (TKVD). GTP is bound by residues Lys474, Asp476, and Thr509. The tract at residues 507-510 (VVTG) is G5 motif. 2 stalk region regions span residues 595–842 (DRNE…IKDT) and 880–934 (CNDV…VQLI). A paddle region region spans residues 742–862 (TDKPQWDAAI…QKALLHCNLC (121 aa)). Residues 777-787 (WKQRWMSWKNR) lie within the membrane without spanning it. Topologically, residues 788 to 966 (TPEQHTRNET…AFIEALHKEK (179 aa)) are mitochondrial intermembrane. An intrachain disulfide couples Cys862 to Cys880. A coiled-coil region spans residues 901-966 (RQQLTNTEVR…AFIEALHKEK (66 aa)).

It belongs to the TRAFAC class dynamin-like GTPase superfamily. Dynamin/Fzo/YdjA family. As to quaternary structure, oligomeric complex consisting of membrane-bound and soluble forms of OPA1. Post-translationally, cleaved by OMA1 or YME1L downstream of the transmembrane region in response to different signals to generate soluble forms. Cleaved by OMA1 at position S1 following stress conditions, generating the short soluble form (Dynamin-like GTPase OPA1, short form; S-OPA1).

The protein resides in the mitochondrion inner membrane. Its subcellular location is the mitochondrion intermembrane space. The enzyme catalyses GTP + H2O = GDP + phosphate + H(+). In terms of biological role, dynamin-related GTPase that is essential for normal mitochondrial morphology by mediating fusion of the mitochondrial inner membranes, regulating cristae morphology and maintaining respiratory chain function. Exists in two forms: the transmembrane, long form (Dynamin-like GTPase OPA1, long form; L-OPA1), which is tethered to the inner mitochondrial membrane, and the short soluble form (Dynamin-like GTPase OPA1, short form; S-OPA1), which results from proteolytic cleavage and localizes in the intermembrane space. Both forms (L-OPA1 and S-OPA1) cooperate to catalyze the fusion of the mitochondrial inner membrane. The equilibrium between L-OPA1 and S-OPA1 is essential: excess levels of S-OPA1, produced by cleavage by OMA1 following loss of mitochondrial membrane potential, lead to an impaired equilibrium between L-OPA1 and S-OPA1, inhibiting mitochondrial fusion. The balance between L-OPA1 and S-OPA1 also influences cristae shape and morphology. Its role in mitochondrial morphology is required for mitochondrial genome maintenance. Constitutes the transmembrane long form (L-OPA1) that plays a central role in mitochondrial inner membrane fusion and cristae morphology. L-OPA1 and the soluble short form (S-OPA1) form higher-order helical assemblies that coordinate the fusion of mitochondrial inner membranes. Inner membrane-anchored L-OPA1 molecules initiate membrane remodeling by recruiting soluble S-OPA1 to rapidly polymerize into a flexible cylindrical scaffold encaging the mitochondrial inner membrane. Once at the membrane surface, the formation of S-OPA1 helices induce bilayer curvature. OPA1 dimerization through the paddle region, which inserts into cardiolipin-containing membrane, promotes GTP hydrolysis and the helical assembly of a flexible OPA1 lattice on the membrane, which drives membrane curvature and mitochondrial fusion. Plays a role in the maintenance and remodeling of mitochondrial cristae, some invaginations of the mitochondrial inner membrane that provide an increase in the surface area. Probably acts by forming helical filaments at the inside of inner membrane tubes with the shape and dimensions of crista junctions. Functionally, constitutes the soluble short form (S-OPA1) generated by cleavage by OMA1, which plays a central role in mitochondrial inner membrane fusion and cristae morphology. The transmembrane long form (L-OPA1) and the S-OPA1 form higher-order helical assemblies that coordinate the fusion of mitochondrial inner membranes. Inner membrane-anchored L-OPA1 molecules initiate membrane remodeling by recruiting soluble S-OPA1 to rapidly polymerize into a flexible cylindrical scaffold encaging the mitochondrial inner membrane. Once at the membrane surface, the formation of S-OPA1 helices induce bilayer curvature. OPA1 dimerization through the paddle region, which inserts into cardiolipin-containing membrane, promotes GTP hydrolysis and the helical assembly of a flexible OPA1 lattice on the membrane, which drives membrane curvature and mitochondrial fusion. Excess levels of S-OPA1 produced by cleavage by OMA1 following stress conditions that induce loss of mitochondrial membrane potential, lead to an impaired equilibrium between L-OPA1 and S-OPA1, thereby inhibiting mitochondrial fusion. Plays a role in the maintenance and remodeling of mitochondrial cristae, some invaginations of the mitochondrial inner membrane that provide an increase in the surface area. Probably acts by forming helical filaments at the inside of inner membrane tubes with the shape and dimensions of crista junctions. This is Dynamin-like GTPase OPA1, mitochondrial from Danio rerio (Zebrafish).